The following is a 193-amino-acid chain: Ion-translocating oxidoreductase complex subunit A (193 aa).

Helical transmembrane passes span 5-25 (FFFI…FLGL), 47-67 (FVVV…LLPF), 72-92 (LRII…EIIL), 102-122 (ILGI…IPLF), 134-154 (ILYA…FSSI), and 171-191 (PIVL…KGLV).

Belongs to the NqrDE/RnfAE family. As to quaternary structure, the complex is composed of six subunits: RnfA, RnfB, RnfC, RnfD, RnfE and RnfG.

It is found in the cell inner membrane. Part of a membrane-bound complex that couples electron transfer with translocation of ions across the membrane. This is Ion-translocating oxidoreductase complex subunit A from Buchnera aphidicola subsp. Schizaphis graminum (strain Sg).